Here is a 318-residue protein sequence, read N- to C-terminus: HPr kinase/phosphorylase (318 aa).

Catalysis depends on residues H141 and K162. 156–163 serves as a coordination point for ATP; the sequence is GDSAMGKS. S163 serves as a coordination point for Mg(2+). The active-site Proton acceptor; for phosphorylation activity. Proton donor; for dephosphorylation activity is the D180. Residues 204-213 form an important for the catalytic mechanism of both phosphorylation and dephosphorylation region; that stretch reads LEVRGLGILN. E205 is a binding site for Mg(2+). R248 is an active-site residue. The tract at residues 269–274 is important for the catalytic mechanism of dephosphorylation; sequence PVAAGR.

Belongs to the HPrK/P family. Homohexamer. Requires Mg(2+) as cofactor.

It carries out the reaction [HPr protein]-L-serine + ATP = [HPr protein]-O-phospho-L-serine + ADP + H(+). The catalysed reaction is [HPr protein]-O-phospho-L-serine + phosphate + H(+) = [HPr protein]-L-serine + diphosphate. Its function is as follows. Catalyzes the ATP- as well as the pyrophosphate-dependent phosphorylation of a specific serine residue in HPr, a phosphocarrier protein of the phosphoenolpyruvate-dependent sugar phosphotransferase system (PTS). HprK/P also catalyzes the pyrophosphate-producing, inorganic phosphate-dependent dephosphorylation (phosphorolysis) of seryl-phosphorylated HPr (P-Ser-HPr). The chain is HPr kinase/phosphorylase from Chromobacterium violaceum (strain ATCC 12472 / DSM 30191 / JCM 1249 / CCUG 213 / NBRC 12614 / NCIMB 9131 / NCTC 9757 / MK).